We begin with the raw amino-acid sequence, 300 residues long: 17-beta-hydroxysteroid dehydrogenase 13 (300 aa).

Positions 1–19 (MNLILELLLLVGIIIYSYL) are cleaved as a signal peptide. Position 33 is a phosphoserine (serine 33). 40-67 (LITGAGHGIGRLTAYEFAKQKSRLVLWD) lines the NAD(+) pocket. At serine 69 the chain carries Phosphoserine. An N6-acetyllysine modification is found at lysine 79. Serine 172 serves as a coordination point for substrate. The active-site Proton acceptor is the tyrosine 185. NAD(+) is bound at residue lysine 189.

The protein belongs to the short-chain dehydrogenases/reductases (SDR) family.

The protein localises to the lipid droplet. The protein resides in the endoplasmic reticulum. It catalyses the reaction 17beta-estradiol + NAD(+) = estrone + NADH + H(+). The enzyme catalyses all-trans-retinol + NAD(+) = all-trans-retinal + NADH + H(+). The catalysed reaction is all-trans-retinal + NAD(+) + H2O = all-trans-retinoate + NADH + 2 H(+). Plays a pivotal role in hepatic lipid metabolism. In vitro, it catalyzes the oxidation of a variety of lipid substrates, including 17beta-estradiol, retinol, retinal, and leukotriene B4. The protein is 17-beta-hydroxysteroid dehydrogenase 13 (Hsd17b13) of Rattus norvegicus (Rat).